We begin with the raw amino-acid sequence, 241 residues long: Cell division cycle-associated protein 4 (241 aa).

One can recognise an SERTA domain in the interval 30–77 (YSLQRQSLLDMSLVKLQLCHMLVEPNLCRSVLIANTVRQIQEEMTQDG).

As to expression, highest levels of expression in the pancreas, thymus, testis, spleen, liver, placenta and leukocytes. Relatively low levels in the lung, kidney, prostate, ovary, small intestine and colon. Hardly detectable, if at all, in the brain, skeletal muscle and heart.

Its subcellular location is the nucleus. Functionally, may participate in the regulation of cell proliferation through the E2F/RB pathway. May be involved in molecular regulation of hematopoietic stem cells and progenitor cell lineage commitment and differentiation. The polypeptide is Cell division cycle-associated protein 4 (CDCA4) (Homo sapiens (Human)).